Reading from the N-terminus, the 212-residue chain is Pyrrolidone-carboxylate peptidase (212 aa).

Active-site residues include Glu80, Cys143, and His165.

It belongs to the peptidase C15 family. Homotetramer.

It localises to the cytoplasm. The catalysed reaction is Release of an N-terminal pyroglutamyl group from a polypeptide, the second amino acid generally not being Pro.. In terms of biological role, removes 5-oxoproline from various penultimate amino acid residues except L-proline. The sequence is that of Pyrrolidone-carboxylate peptidase from Vibrio vulnificus (strain YJ016).